We begin with the raw amino-acid sequence, 297 residues long: Phosphoribosylaminoimidazole-succinocarboxamide synthase (297 aa).

This sequence belongs to the SAICAR synthetase family.

It carries out the reaction 5-amino-1-(5-phospho-D-ribosyl)imidazole-4-carboxylate + L-aspartate + ATP = (2S)-2-[5-amino-1-(5-phospho-beta-D-ribosyl)imidazole-4-carboxamido]succinate + ADP + phosphate + 2 H(+). It participates in purine metabolism; IMP biosynthesis via de novo pathway; 5-amino-1-(5-phospho-D-ribosyl)imidazole-4-carboxamide from 5-amino-1-(5-phospho-D-ribosyl)imidazole-4-carboxylate: step 1/2. This is Phosphoribosylaminoimidazole-succinocarboxamide synthase from Corynebacterium glutamicum (strain R).